The primary structure comprises 256 residues: Thiazole synthase (256 aa).

The active-site Schiff-base intermediate with DXP is Lys95. Residues Gly156, 182 to 183 (AG), and 204 to 205 (NT) contribute to the 1-deoxy-D-xylulose 5-phosphate site.

This sequence belongs to the ThiG family. Homotetramer. Forms heterodimers with either ThiH or ThiS.

It localises to the cytoplasm. The enzyme catalyses [ThiS sulfur-carrier protein]-C-terminal-Gly-aminoethanethioate + 2-iminoacetate + 1-deoxy-D-xylulose 5-phosphate = [ThiS sulfur-carrier protein]-C-terminal Gly-Gly + 2-[(2R,5Z)-2-carboxy-4-methylthiazol-5(2H)-ylidene]ethyl phosphate + 2 H2O + H(+). Its pathway is cofactor biosynthesis; thiamine diphosphate biosynthesis. Its function is as follows. Catalyzes the rearrangement of 1-deoxy-D-xylulose 5-phosphate (DXP) to produce the thiazole phosphate moiety of thiamine. Sulfur is provided by the thiocarboxylate moiety of the carrier protein ThiS. In vitro, sulfur can be provided by H(2)S. The protein is Thiazole synthase of Escherichia coli (strain 55989 / EAEC).